Here is a 503-residue protein sequence, read N- to C-terminus: Maturase K (503 aa).

This sequence belongs to the intron maturase 2 family. MatK subfamily.

Its subcellular location is the plastid. The protein resides in the chloroplast. Functionally, usually encoded in the trnK tRNA gene intron. Probably assists in splicing its own and other chloroplast group II introns. The sequence is that of Maturase K from Rosa rugosa (Rugosa rose).